Consider the following 338-residue polypeptide: Ornithine carbamoyltransferase, catabolic (338 aa).

Carbamoyl phosphate is bound by residues 58–61 (STRT), Gln85, Arg109, and 136–139 (HPTQ). L-ornithine-binding positions include Asn168, Asp232, and 236–237 (SM). Carbamoyl phosphate is bound by residues 273–274 (CL) and Arg318.

It belongs to the aspartate/ornithine carbamoyltransferase superfamily. OTCase family.

It localises to the cytoplasm. The catalysed reaction is carbamoyl phosphate + L-ornithine = L-citrulline + phosphate + H(+). It participates in amino-acid degradation; L-arginine degradation via ADI pathway; carbamoyl phosphate from L-arginine: step 2/2. Functionally, reversibly catalyzes the transfer of the carbamoyl group from carbamoyl phosphate (CP) to the N(epsilon) atom of ornithine (ORN) to produce L-citrulline. The protein is Ornithine carbamoyltransferase, catabolic of Streptococcus gordonii (strain Challis / ATCC 35105 / BCRC 15272 / CH1 / DL1 / V288).